Reading from the N-terminus, the 191-residue chain is uncharacterized protein (191 aa).

A signal peptide spans 1-17 (MESIILSIAIFIGVLLG). A disordered region spans residues 82 to 148 (TFSGSRTSPD…DVGAGSGSSI (67 aa)). The chain crosses the membrane as a helical span at residues 168 to 188 (VAVLITAAILSAPVTAIALLE).

The protein localises to the membrane. This is an uncharacterized protein from Saccharomyces cerevisiae (strain ATCC 204508 / S288c) (Baker's yeast).